Reading from the N-terminus, the 1192-residue chain is ATP-dependent helicase/deoxyribonuclease subunit B (1192 aa).

It belongs to the helicase family. AddB/RexB type 2 subfamily. As to quaternary structure, heterodimer of AddA and RexB. Mg(2+) serves as cofactor.

Its function is as follows. The heterodimer acts as both an ATP-dependent DNA helicase and an ATP-dependent, dual-direction single-stranded exonuclease. Recognizes the chi site generating a DNA molecule suitable for the initiation of homologous recombination. This subunit has 5' -&gt; 3' nuclease activity but not helicase activity. This is ATP-dependent helicase/deoxyribonuclease subunit B from Pediococcus pentosaceus (strain ATCC 25745 / CCUG 21536 / LMG 10740 / 183-1w).